The sequence spans 263 residues: Proliferating cell nuclear antigen (263 aa).

A DNA-binding region spans residues 61-80 (RCDRTINLGLSLANMSKALK).

The protein belongs to the PCNA family. In terms of assembly, homotrimer. Forms a complex with activator 1 heteropentamer in the presence of ATP.

The protein localises to the nucleus. This protein is an auxiliary protein of DNA polymerase delta and is involved in the control of eukaryotic DNA replication by increasing the polymerase's processibility during elongation of the leading strand. In Caenorhabditis elegans, this protein is Proliferating cell nuclear antigen (pcn-1).